Here is a 116-residue protein sequence, read N- to C-terminus: Histone H2B (116 aa).

Residues 1 to 11 show a composition bias toward basic residues; the sequence is TSGKAAKKAGK. The interval 1 to 25 is disordered; that stretch reads TSGKAAKKAGKAQKSITKGDKKKRK. 3 positions are modified to N6-acetyllysine: Lys-4, Lys-11, and Lys-14. Ser-103 carries an O-linked (GlcNAc) serine glycan. Residue Lys-111 forms a Glycyl lysine isopeptide (Lys-Gly) (interchain with G-Cter in ubiquitin) linkage.

The nucleosome is a histone octamer containing two molecules each of H2A, H2B, H3 and H4 assembled in one H3-H4 heterotetramer and two H2A-H2B heterodimers. The octamer wraps approximately 147 bp of DNA. In terms of processing, monoubiquitination gives a specific tag for epigenetic transcriptional activation and is also prerequisite for histone H3 'Lys-4' and 'Lys-79' methylation. GlcNAcylation at Ser-103 promotes monoubiquitination of Lys-111. It fluctuates in response to extracellular glucose, and associates with transcribed genes.

The protein localises to the nucleus. Its subcellular location is the chromosome. Functionally, core component of nucleosome. Nucleosomes wrap and compact DNA into chromatin, limiting DNA accessibility to the cellular machineries which require DNA as a template. Histones thereby play a central role in transcription regulation, DNA repair, DNA replication and chromosomal stability. DNA accessibility is regulated via a complex set of post-translational modifications of histones, also called histone code, and nucleosome remodeling. Its function is as follows. A mixture of histones H2B and H4 has antimicrobial activity against the Gram-positive bacterium M.luteus. This Penaeus vannamei (Whiteleg shrimp) protein is Histone H2B.